Consider the following 473-residue polypeptide: LKKRKVNILNHPGEHAGSNDANARRKYGVRGNFRDSDGELIALKNYMDAQYFGEIGIGTPPQKFTVIFDTGSSNLWVPSSKCYFSVACLFHSKYRSTDSTTYKKNGKSAAIQYGTGSISGFFSQDSVKLGDLLVKEQDFIEATKEPGITFLAAKFDGILGLGFQEISVGDAVPVWYTMLNQGLVQEPVFSFWLNRNADEQEGGELVFGGVDPNHFKGEHTYVPVTQKGYWQFEMGDVLIGDKTTGFCASGCAAIADSGTSLLAGTTTIVTQINQAIGAAGVMSQQCKSLVDQYGKSMIEMLLSEEQPEKICSQMKLCSFDGSHDTSMIIESVVDKSKGKSSGLPMRCVPCARWVVWMQNQIRQNETEENIINYVDKLCERLPSPMGESAVDCSSLSSMPNIAFTVGGKTFNLSPEQYVLKVGEGATAQCISGFTAMDVAPPHGPLWILGDVFMGQYHTVFDYGNLRVGFAEAA.

Residues 1-33 (LKKRKVNILNHPGEHAGSNDANARRKYGVRGNF) constitute a propeptide, activation peptide. The region spanning 51–470 (YFGEIGIGTP…DYGNLRVGFA (420 aa)) is the Peptidase A1 domain. Residue aspartate 69 is part of the active site. Disulfide bonds link cysteine 82/cysteine 88 and cysteine 247/cysteine 251. The active site involves aspartate 256. A Saposin B-type domain is found at 281 to 384 (VMSQQCKSLV…DKLCERLPSP (104 aa)). Intrachain disulfides connect cysteine 286–cysteine 378, cysteine 311–cysteine 350, cysteine 317–cysteine 347, and cysteine 392–cysteine 429. N-linked (GlcNAc...) asparagine glycosylation occurs at asparagine 364.

This sequence belongs to the peptidase A1 family. Mostly present in the violet parts of styles and corollas of mature flowers.

This Cynara cardunculus (Cardoon) protein is Cyprosin (CYPRO1).